Here is a 309-residue protein sequence, read N- to C-terminus: MVGFKATDVPPTATVKFLGAGTAACIADLITFPLDTAKVRLQIQGESQGLVRTAASAQYRGVLGTILTMVRTEGPRSLYNGLVAGLQRQMSFASVRIGLYDSVKQFYTKGSEHAGIGSRLLAGSTTGALAVAVAQPTDVVKVRFQAQARAGGGRRYQSTVEAYKTIAREEGIRGLWKGTSPNVARNAIVNCAELVTYDLIKDTLLKANLMTDDLPCHFTSAFGAGFCTTVIASPVDVVKTRYMNSALGQYHSAGHCALTMLRKEGPRAFYKGFMPSFLRLGSWNVVMFVTYEQLKRALMAAYQSREAPF.

Residues 1–16 are Mitochondrial intermembrane-facing; sequence MVGFKATDVPPTATVK. 3 Solcar repeats span residues 11–106, 114–203, and 212–297; these read PTAT…VKQF, AGIG…IKDT, and DDLP…LKRA. Residues 16–63 are important for interaction with long-chain fatty acids; the sequence is KFLGAGTAACIADLITFPLDTAKVRLQIQGESQGLVRTAASAQYRGVL. A helical membrane pass occupies residues 17–40; that stretch reads FLGAGTAACIADLITFPLDTAKVR. Residues 41 to 77 lie on the Mitochondrial matrix side of the membrane; the sequence is LQIQGESQGLVRTAASAQYRGVLGTILTMVRTEGPRS. The helical transmembrane segment at 78 to 103 threads the bilayer; it reads LYNGLVAGLQRQMSFASVRIGLYDSV. The Mitochondrial intermembrane portion of the chain corresponds to 104-119; that stretch reads KQFYTKGSEHAGIGSR. Residues 120 to 145 form a helical membrane-spanning segment; the sequence is LLAGSTTGALAVAVAQPTDVVKVRFQ. Over 146-173 the chain is Mitochondrial matrix; that stretch reads AQARAGGGRRYQSTVEAYKTIAREEGIR. The helical transmembrane segment at 174 to 199 threads the bilayer; sequence GLWKGTSPNVARNAIVNCAELVTYDL. The Mitochondrial intermembrane segment spans residues 200–217; it reads IKDTLLKANLMTDDLPCH. Residues 218–242 traverse the membrane as a helical segment; it reads FTSAFGAGFCTTVIASPVDVVKTRY. Over 243–268 the chain is Mitochondrial matrix; it reads MNSALGQYHSAGHCALTMLRKEGPRA. A helical transmembrane segment spans residues 269–294; sequence FYKGFMPSFLRLGSWNVVMFVTYEQL. Residues 278 to 285 are important for interaction with long-chain fatty acids; sequence LRLGSWNV. Residues 295-309 are Mitochondrial intermembrane-facing; it reads KRALMAAYQSREAPF.

The protein belongs to the mitochondrial carrier (TC 2.A.29) family. As to quaternary structure, homotetramer. Adopts an asymmetrical dimer of dimers functional form. Interacts with MICU1 (when methylated); leading to decrease the calcium sensitivity of MICU1. As to expression, widely expressed. Highest in spleen, lung, white and brown adipose tissues. 4-6 times higher levels are detected in white adipose tissue of ob/ob and db/db mice when compared to lean littermates. Expressed in neurons of the ventromedial nucleus of the hypothalamus (at protein level). Expressed in thymocytes (at protein level).

It localises to the mitochondrion inner membrane. The enzyme catalyses L-aspartate(out) + phosphate(in) + H(+)(in) = L-aspartate(in) + phosphate(out) + H(+)(out). It carries out the reaction oxaloacetate(out) + phosphate(in) + H(+)(in) = oxaloacetate(in) + phosphate(out) + H(+)(out). The catalysed reaction is (S)-malate(out) + phosphate(in) + H(+)(in) = (S)-malate(in) + phosphate(out) + H(+)(out). It catalyses the reaction malonate(out) + phosphate(in) + H(+)(in) = malonate(in) + phosphate(out) + H(+)(out). The enzyme catalyses sulfate(out) + phosphate(in) + H(+)(in) = sulfate(in) + phosphate(out) + H(+)(out). It carries out the reaction (S)-malate(out) = (S)-malate(in). The catalysed reaction is L-aspartate(out) = L-aspartate(in). It catalyses the reaction phosphate(in) = phosphate(out). The enzyme catalyses chloride(in) = chloride(out). It carries out the reaction H(+)(in) = H(+)(out). The catalysed reaction is a long-chain fatty acid(out) = a long-chain fatty acid(in). Proton conductance is activated by free long-chain fatty acids and allosterically inhibited by purine nucleotides. Could be constitutively inhibited by GDP. Antiporter that exports dicarboxylate intermediates of the Krebs cycle in exchange for phosphate plus a proton across the inner membrane of mitochondria, a process driven by mitochondrial motive force with an overall impact on glycolysis, glutaminolysis and glutathione-dependent redox balance. Continuous export of oxaloacetate and related four-carbon dicarboxylates from mitochondrial matrix into the cytosol negatively regulates the oxidation of acetyl-CoA substrates via the Krebs cycle lowering the ATP/ADP ratio and reactive oxygen species (ROS) production. May mediate inducible proton entry into the mitochondrial matrix affecting ATP turnover as a protection mechanism against oxidative stress. The proton currents are most likely associated with fatty acid flipping across the inner membrane of mitochondria in a metabolic process regulated by free fatty acids and purine nucleotides. Regulates the use of glucose as a source of energy. Required for glucose-induced DRP1-dependent mitochondrial fission and neuron activation in the ventromedial nucleus of the hypothalamus (VMH). This mitochondrial adaptation mechanism modulates the VMH pool of glucose-excited neurons with an impact on systemic glucose homeostasis. Regulates ROS levels and metabolic reprogramming of macrophages during the resolution phase of inflammation. Attenuates ROS production in response to IL33 to preserve the integrity of the Krebs cycle required for persistent production of itaconate and subsequent GATA3-dependent differentiation of inflammation-resolving alternatively activated macrophages. Can unidirectionally transport anions including L-malate, L-aspartate, phosphate and chloride ions. Does not mediate adaptive thermogenesis. The sequence is that of Dicarboxylate carrier UCP2 (Ucp2) from Mus musculus (Mouse).